The chain runs to 923 residues: Alanine--tRNA ligase (923 aa).

H611, H615, C714, and H718 together coordinate Zn(2+). A compositionally biased stretch (gly residues) spans 886 to 903 (VGGGGGGRPNMARGGGTD). A disordered region spans residues 886–909 (VGGGGGGRPNMARGGGTDPSGMDN).

Belongs to the class-II aminoacyl-tRNA synthetase family. The cofactor is Zn(2+).

The protein resides in the cytoplasm. It carries out the reaction tRNA(Ala) + L-alanine + ATP = L-alanyl-tRNA(Ala) + AMP + diphosphate. In terms of biological role, catalyzes the attachment of alanine to tRNA(Ala) in a two-step reaction: alanine is first activated by ATP to form Ala-AMP and then transferred to the acceptor end of tRNA(Ala). Also edits incorrectly charged Ser-tRNA(Ala) and Gly-tRNA(Ala) via its editing domain. The sequence is that of Alanine--tRNA ligase from Methanococcoides burtonii (strain DSM 6242 / NBRC 107633 / OCM 468 / ACE-M).